The chain runs to 509 residues: MDIRAAEISAILKDQIKNFGKEAEVSEVGQVLSVGDGIARVYGLDNVQAGEMVEFPGGIRGMALNLESDNVGVVIFGSDRDIKEGDTVKRTGAIVDVPVGPELLGRVVDALGNPIDGKGPINATRRSRVDVKAPGIIPRKSVHEPMSTGLKAIDALIPVGRGQRELVIGDRQTGKTAILLDAFLNQKAIHESGPEGEKLYCVYVAVGQKRSTVAQFVKVLEERGALKYSIIVAATASDPAPMQFLAPFAGCAMGEYFRDNGMHALIGYDDLSKQAVSYRQMSLLLRRPPGREAYPGDVFYLHSRLLERAAKMNDDKGAGSLTALPVIETQGNDVSAFIPTNVISITDGQIFLETDLFYQGIRPAVNVGLSVSRVGSSAQIKAMKQVAGSIKGELAQYREMAAFAQFGSDLDAATQRLLNRGARLTELLKQPQFSPLKTEEQVAVIFAGVNGYLDKLPVASVGKFEQGLLSYLRSEGSAILDAIRTEKAISDGTKGKLTAALDSFAKSFQ.

169–176 (GDRQTGKT) provides a ligand contact to ATP.

It belongs to the ATPase alpha/beta chains family. F-type ATPases have 2 components, CF(1) - the catalytic core - and CF(0) - the membrane proton channel. CF(1) has five subunits: alpha(3), beta(3), gamma(1), delta(1), epsilon(1). CF(0) has three main subunits: a(1), b(2) and c(9-12). The alpha and beta chains form an alternating ring which encloses part of the gamma chain. CF(1) is attached to CF(0) by a central stalk formed by the gamma and epsilon chains, while a peripheral stalk is formed by the delta and b chains.

Its subcellular location is the cell inner membrane. The enzyme catalyses ATP + H2O + 4 H(+)(in) = ADP + phosphate + 5 H(+)(out). Functionally, produces ATP from ADP in the presence of a proton gradient across the membrane. The alpha chain is a regulatory subunit. This chain is ATP synthase subunit alpha, found in Rhizobium etli (strain CIAT 652).